A 218-amino-acid chain; its full sequence is Small ribosomal subunit protein uS3c (218 aa).

Positions 47–118 (VQKNIRISSG…KLNIAITRIS (72 aa)) constitute a KH type-2 domain.

The protein belongs to the universal ribosomal protein uS3 family. As to quaternary structure, part of the 30S ribosomal subunit.

It localises to the plastid. The protein localises to the chloroplast. The chain is Small ribosomal subunit protein uS3c (rps3) from Aethionema cordifolium (Lebanon stonecress).